The sequence spans 176 residues: Peptide deformylase 2 (176 aa).

Positions 99 and 141 each coordinate Fe cation. The active site involves E142. H145 provides a ligand contact to Fe cation.

This sequence belongs to the polypeptide deformylase family. The cofactor is Fe(2+).

The enzyme catalyses N-terminal N-formyl-L-methionyl-[peptide] + H2O = N-terminal L-methionyl-[peptide] + formate. Functionally, removes the formyl group from the N-terminal Met of newly synthesized proteins. Requires at least a dipeptide for an efficient rate of reaction. N-terminal L-methionine is a prerequisite for activity but the enzyme has broad specificity at other positions. The sequence is that of Peptide deformylase 2 from Bordetella bronchiseptica (strain ATCC BAA-588 / NCTC 13252 / RB50) (Alcaligenes bronchisepticus).